The chain runs to 95 residues: Succinate dehydrogenase membrane anchor subunit (95 aa).

At 1 to 19 (MYKTLLAQVFFHSIAKKKL) the chain is on the mitochondrial matrix side. Residues 20-40 (YFFWLPRLFSLLLVPGFLFDI) form a helical membrane-spanning segment. Residue Glu-41 is a topological domain, mitochondrial intermembrane. A helical membrane pass occupies residues 42–62 (ILFLFHPIILLHASLGLSVII). Heme is bound at residue His-53. The Mitochondrial matrix portion of the chain corresponds to 63–74 (EDYIHIETIKFQ). Tyr-65 is an a ubiquinone binding site. A helical membrane pass occupies residues 75–95 (YLSLIKLLLVLLINLNILYLL).

In terms of assembly, part of an enzyme complex containing four subunits: a flavoprotein, an iron-sulfur protein, plus two membrane-anchoring proteins. Heme is required as a cofactor.

The protein localises to the mitochondrion inner membrane. It participates in carbohydrate metabolism; tricarboxylic acid cycle. Its function is as follows. Membrane-anchoring subunit of succinate dehydrogenase (SDH). The sequence is that of Succinate dehydrogenase membrane anchor subunit (SDH4) from Porphyra purpurea (Red seaweed).